Consider the following 458-residue polypeptide: UDP-N-acetylmuramoylalanine--D-glutamate ligase (458 aa).

124–130 (GSDGKTT) is an ATP binding site.

It belongs to the MurCDEF family.

The protein localises to the cytoplasm. It catalyses the reaction UDP-N-acetyl-alpha-D-muramoyl-L-alanine + D-glutamate + ATP = UDP-N-acetyl-alpha-D-muramoyl-L-alanyl-D-glutamate + ADP + phosphate + H(+). Its pathway is cell wall biogenesis; peptidoglycan biosynthesis. In terms of biological role, cell wall formation. Catalyzes the addition of glutamate to the nucleotide precursor UDP-N-acetylmuramoyl-L-alanine (UMA). In Clostridium beijerinckii (strain ATCC 51743 / NCIMB 8052) (Clostridium acetobutylicum), this protein is UDP-N-acetylmuramoylalanine--D-glutamate ligase.